Here is a 90-residue protein sequence, read N- to C-terminus: Small ribosomal subunit protein bS16 (90 aa).

It belongs to the bacterial ribosomal protein bS16 family.

This is Small ribosomal subunit protein bS16 from Lactobacillus delbrueckii subsp. bulgaricus (strain ATCC 11842 / DSM 20081 / BCRC 10696 / JCM 1002 / NBRC 13953 / NCIMB 11778 / NCTC 12712 / WDCM 00102 / Lb 14).